A 217-amino-acid chain; its full sequence is Replication-associated protein A (217 aa).

The segment covering 1 to 17 has biased composition (low complexity); the sequence is MRAPASSAASNRPGPSN. The disordered stretch occupies residues 1-22; sequence MRAPASSAASNRPGPSNHPTPR. The 104-residue stretch at 22–125 folds into the CRESS-DNA virus Rep endonuclease domain; it reads RWNSKQFFLT…NGDSDEMGEL (104 aa). The short motif at 29 to 32 is the RCR-1 element; it reads FLTY. 3 residues coordinate a divalent metal cation: Glu63, His71, and His73. The RCR-2 motif lies at 71-73; that stretch reads HLH. Tyr111 serves as the catalytic For DNA cleavage activity. The short motif at 111–114 is the RCR-3 element; that stretch reads YISK. Residues 176 to 188 are oligomerization; the sequence is SAAALFTEPPPVY.

This sequence belongs to the geminiviridae Rep protein family. In terms of assembly, homooligomer. Part of the C- and V-complexes which are RepA-Rep-DNA complexes involved in the c-sense and v-sense transcription.

It is found in the host nucleus. The protein localises to the host cytoplasm. Implicated in enhancement of V-sense gene expression. Acts a an inhibitor of C-sense gene transcription. The sequence is that of Replication-associated protein A from Miscanthus sacchariflorus (MiSV).